We begin with the raw amino-acid sequence, 419 residues long: MHLDWTLVLASRIRKVKCDEKKPCCQKCIDTGRTCDGYESPFRVVTSRSIINGARASGIPGAASRPVRPALTEISPADIDLLNRYFSTKTMFDVKLGCDEEAREVLEASLTDPTVRHAVSSLRSLREHLETSGDVSASAAQQSPSYGYDYGVQQYCMALGGLASNLSSPGSNALKSALLCCQIFISIEQVRGNYGTMAQHIIQGLGIMHEYRARPTLDDANNLVPAHHAQLPLLDAFVIKLFAAPCKFAEPSATADKEGGKAVSMCAISRHEQTVGSRNLRTIVPDMRTELTRISTSTLDFLVKVSSVDSAGNALRLLPEKTALLESLKSWLMDLELVHADIKSPGTEPLAVSFLRLFHQILKIILVEALNSSSNLQAELRTENDRLQGIGSIIDERVQSQRKNSSALDLIDNRLKCPA.

A DNA-binding region (zn(2)-C6 fungal-type) is located at residues 12–35 (RIRKVKCDEKKPCCQKCIDTGRTC).

It is found in the nucleus. Functionally, transcription factor that may coregulate the expression of the gene cluster that mediates the biosynthesis of the lipopeptide antibiotics leucinostatins that show extensive biological activities, including antimalarial, antiviral, antibacterial, antifungal, and antitumor activities, as well as phytotoxic. The chain is Transcription regulator lscL from Purpureocillium lilacinum (Paecilomyces lilacinus).